A 594-amino-acid polypeptide reads, in one-letter code: Cytosolic Fe-S cluster assembly factor NAR1 (594 aa).

The [4Fe-4S] cluster site is built by Cys-20, Cys-88, Cys-91, Cys-94, Cys-209, and Cys-264. A disordered region spans residues 444 to 465 (RRARMSKSEDSSGASASSMAPA). Residues 454–465 (SSGASASSMAPA) are compositionally biased toward low complexity. Residues Cys-481 and Cys-485 each coordinate [4Fe-4S] cluster. The segment at 492–511 (IAAPAPTSTPPAAPAPAHAA) is disordered.

It belongs to the NARF family.

In terms of biological role, component of the cytosolic Fe/S protein assembly machinery. Required for maturation of extramitochondrial Fe/S proteins. May play a role in the transfer of pre-assembled Fe/S clusters to target apoproteins. This is Cytosolic Fe-S cluster assembly factor NAR1 (NAR1) from Lodderomyces elongisporus (strain ATCC 11503 / CBS 2605 / JCM 1781 / NBRC 1676 / NRRL YB-4239) (Yeast).